We begin with the raw amino-acid sequence, 583 residues long: 2-succinyl-5-enolpyruvyl-6-hydroxy-3-cyclohexene-1-carboxylate synthase (583 aa).

Belongs to the TPP enzyme family. MenD subfamily. As to quaternary structure, homodimer. It depends on Mg(2+) as a cofactor. Mn(2+) is required as a cofactor. Thiamine diphosphate serves as cofactor.

It catalyses the reaction isochorismate + 2-oxoglutarate + H(+) = 5-enolpyruvoyl-6-hydroxy-2-succinyl-cyclohex-3-ene-1-carboxylate + CO2. The protein operates within quinol/quinone metabolism; 1,4-dihydroxy-2-naphthoate biosynthesis; 1,4-dihydroxy-2-naphthoate from chorismate: step 2/7. It participates in quinol/quinone metabolism; menaquinone biosynthesis. Catalyzes the thiamine diphosphate-dependent decarboxylation of 2-oxoglutarate and the subsequent addition of the resulting succinic semialdehyde-thiamine pyrophosphate anion to isochorismate to yield 2-succinyl-5-enolpyruvyl-6-hydroxy-3-cyclohexene-1-carboxylate (SEPHCHC). This Chlorobaculum parvum (strain DSM 263 / NCIMB 8327) (Chlorobium vibrioforme subsp. thiosulfatophilum) protein is 2-succinyl-5-enolpyruvyl-6-hydroxy-3-cyclohexene-1-carboxylate synthase.